The primary structure comprises 372 residues: 4-hydroxy-3-methylbut-2-en-1-yl diphosphate synthase (flavodoxin) (372 aa).

[4Fe-4S] cluster-binding residues include Cys-270, Cys-273, Cys-305, and Glu-312.

It belongs to the IspG family. [4Fe-4S] cluster serves as cofactor.

It carries out the reaction (2E)-4-hydroxy-3-methylbut-2-enyl diphosphate + oxidized [flavodoxin] + H2O + 2 H(+) = 2-C-methyl-D-erythritol 2,4-cyclic diphosphate + reduced [flavodoxin]. It functions in the pathway isoprenoid biosynthesis; isopentenyl diphosphate biosynthesis via DXP pathway; isopentenyl diphosphate from 1-deoxy-D-xylulose 5-phosphate: step 5/6. Its function is as follows. Converts 2C-methyl-D-erythritol 2,4-cyclodiphosphate (ME-2,4cPP) into 1-hydroxy-2-methyl-2-(E)-butenyl 4-diphosphate. The chain is 4-hydroxy-3-methylbut-2-en-1-yl diphosphate synthase (flavodoxin) from Shewanella amazonensis (strain ATCC BAA-1098 / SB2B).